The chain runs to 101 residues: Small ribosomal subunit protein bS18c (101 aa).

A compositionally biased stretch (basic residues) spans 1 to 19 (MDKSKQPFRKSKRSFRRRL). A disordered region spans residues 1–26 (MDKSKQPFRKSKRSFRRRLPPIGSGD).

It belongs to the bacterial ribosomal protein bS18 family. In terms of assembly, part of the 30S ribosomal subunit.

It is found in the plastid. Its subcellular location is the chloroplast. In Phalaenopsis aphrodite subsp. formosana (Moth orchid), this protein is Small ribosomal subunit protein bS18c.